A 131-amino-acid chain; its full sequence is Small ribosomal subunit protein bS18 (131 aa).

Positions 1–10 (MSNGTDSKTA) are enriched in polar residues. Residues 1–60 (MSNGTDSKTASAPPARSGGGFGGGGSRGGDRGDRGDRGGDRGDRGGGLGGDDDKRGGGRG) are disordered. Gly residues predominate over residues 17 to 27 (SGGGFGGGGSR). Over residues 28–44 (GGDRGDRGDRGGDRGDR) the composition is skewed to basic and acidic residues.

It belongs to the bacterial ribosomal protein bS18 family. Part of the 30S ribosomal subunit. Forms a tight heterodimer with protein bS6.

In terms of biological role, binds as a heterodimer with protein bS6 to the central domain of the 16S rRNA, where it helps stabilize the platform of the 30S subunit. This chain is Small ribosomal subunit protein bS18, found in Myxococcus xanthus (strain DK1622).